The following is a 595-amino-acid chain: DNA polymerase (595 aa).

The 212-residue stretch at 1–212 (MIELRHEVQG…CKSLTPLVPD (212 aa)) folds into the 3'-5' exonuclease domain. The polymerase stretch occupies residues 213-595 (VSRSLVPYEH…SWGSLYGADY (383 aa)).

This sequence belongs to the DNA polymerase type-A family.

It carries out the reaction DNA(n) + a 2'-deoxyribonucleoside 5'-triphosphate = DNA(n+1) + diphosphate. Functionally, replicates viral genomic DNA. This polymerase possesses two enzymatic activities: DNA synthesis (polymerase) and an exonucleolytic activity that degrades single-stranded DNA in the 3'-5' direction. The sequence is that of DNA polymerase (44) from Mycobacterium phage L5 (Mycobacteriophage L5).